A 950-amino-acid chain; its full sequence is Glycine dehydrogenase (decarboxylating) (950 aa).

At K699 the chain carries N6-(pyridoxal phosphate)lysine.

Belongs to the GcvP family. The glycine cleavage system is composed of four proteins: P, T, L and H. Pyridoxal 5'-phosphate serves as cofactor.

It catalyses the reaction N(6)-[(R)-lipoyl]-L-lysyl-[glycine-cleavage complex H protein] + glycine + H(+) = N(6)-[(R)-S(8)-aminomethyldihydrolipoyl]-L-lysyl-[glycine-cleavage complex H protein] + CO2. Functionally, the glycine cleavage system catalyzes the degradation of glycine. The P protein binds the alpha-amino group of glycine through its pyridoxal phosphate cofactor; CO(2) is released and the remaining methylamine moiety is then transferred to the lipoamide cofactor of the H protein. The polypeptide is Glycine dehydrogenase (decarboxylating) (Chromobacterium violaceum (strain ATCC 12472 / DSM 30191 / JCM 1249 / CCUG 213 / NBRC 12614 / NCIMB 9131 / NCTC 9757 / MK)).